The sequence spans 762 residues: Endonuclease MutS2 (762 aa).

329-336 contributes to the ATP binding site; the sequence is GPNTGGKT. Positions 682 to 757 constitute a Smr domain; that stretch reads LNLIGKDVET…GSGVTVVYLE (76 aa).

This sequence belongs to the DNA mismatch repair MutS family. MutS2 subfamily. Homodimer. Binds to stalled ribosomes, contacting rRNA.

In terms of biological role, endonuclease that is involved in the suppression of homologous recombination and thus may have a key role in the control of bacterial genetic diversity. Acts as a ribosome collision sensor, splitting the ribosome into its 2 subunits. Detects stalled/collided 70S ribosomes which it binds and splits by an ATP-hydrolysis driven conformational change. Acts upstream of the ribosome quality control system (RQC), a ribosome-associated complex that mediates the extraction of incompletely synthesized nascent chains from stalled ribosomes and their subsequent degradation. Probably generates substrates for RQC. This Aquifex aeolicus (strain VF5) protein is Endonuclease MutS2.